Here is a 245-residue protein sequence, read N- to C-terminus: Protein ARV 1 (245 aa).

A run of 5 helical transmembrane segments spans residues 70-90 (INPA…AYLL), 117-137 (IKVL…FAIA), 163-183 (IFLL…FVDI), 200-220 (TMTR…LVGQ), and 224-244 (PTIF…FFRI).

This sequence belongs to the ARV1 family. Restricted to tissues in which cells are actively dividing or expanding. Mostly expressed in roots and flowers, and, to a lower extent, in stems and leaves.

The protein localises to the endoplasmic reticulum membrane. Functionally, mediator of sterol homeostasis involved in sterol uptake, trafficking and distribution into membranes. Also regulates the sphingolipid metabolism. The polypeptide is Protein ARV 1 (Arabidopsis thaliana (Mouse-ear cress)).